A 439-amino-acid chain; its full sequence is GTPase Obg (439 aa).

Residues Ile-4 to Leu-162 form the Obg domain. Residues Ala-163–Lys-336 enclose the OBG-type G domain. Residues Gly-169–Ser-176, Phe-194–Val-198, Asp-218–Gly-221, Asn-288–Asp-291, and Ser-317–Val-319 contribute to the GTP site. Positions 176 and 196 each coordinate Mg(2+). Residues Leu-361–Glu-439 enclose the OCT domain.

It belongs to the TRAFAC class OBG-HflX-like GTPase superfamily. OBG GTPase family. Monomer. Mg(2+) serves as cofactor.

It is found in the cytoplasm. An essential GTPase which binds GTP, GDP and possibly (p)ppGpp with moderate affinity, with high nucleotide exchange rates and a fairly low GTP hydrolysis rate. Plays a role in control of the cell cycle, stress response, ribosome biogenesis and in those bacteria that undergo differentiation, in morphogenesis control. This chain is GTPase Obg, found in Fervidobacterium nodosum (strain ATCC 35602 / DSM 5306 / Rt17-B1).